The primary structure comprises 94 residues: Aspartyl/glutamyl-tRNA(Asn/Gln) amidotransferase subunit C (94 aa).

It belongs to the GatC family. In terms of assembly, heterotrimer of A, B and C subunits.

It carries out the reaction L-glutamyl-tRNA(Gln) + L-glutamine + ATP + H2O = L-glutaminyl-tRNA(Gln) + L-glutamate + ADP + phosphate + H(+). It catalyses the reaction L-aspartyl-tRNA(Asn) + L-glutamine + ATP + H2O = L-asparaginyl-tRNA(Asn) + L-glutamate + ADP + phosphate + 2 H(+). In terms of biological role, allows the formation of correctly charged Asn-tRNA(Asn) or Gln-tRNA(Gln) through the transamidation of misacylated Asp-tRNA(Asn) or Glu-tRNA(Gln) in organisms which lack either or both of asparaginyl-tRNA or glutaminyl-tRNA synthetases. The reaction takes place in the presence of glutamine and ATP through an activated phospho-Asp-tRNA(Asn) or phospho-Glu-tRNA(Gln). This Heliobacterium modesticaldum (strain ATCC 51547 / Ice1) protein is Aspartyl/glutamyl-tRNA(Asn/Gln) amidotransferase subunit C.